The following is a 498-amino-acid chain: ATP synthase subunit beta, chloroplastic (498 aa).

An ATP-binding site is contributed by 172 to 179 (GGAGVGKT).

The protein belongs to the ATPase alpha/beta chains family. F-type ATPases have 2 components, CF(1) - the catalytic core - and CF(0) - the membrane proton channel. CF(1) has five subunits: alpha(3), beta(3), gamma(1), delta(1), epsilon(1). CF(0) has four main subunits: a(1), b(1), b'(1) and c(9-12).

The protein localises to the plastid. It localises to the chloroplast thylakoid membrane. The catalysed reaction is ATP + H2O + 4 H(+)(in) = ADP + phosphate + 5 H(+)(out). Functionally, produces ATP from ADP in the presence of a proton gradient across the membrane. The catalytic sites are hosted primarily by the beta subunits. The sequence is that of ATP synthase subunit beta, chloroplastic from Nicotiana sylvestris (Wood tobacco).